Reading from the N-terminus, the 930-residue chain is APC membrane recruitment protein 1 (930 aa).

Disordered stretches follow at residues 1-33 (MEIA…PPSV), 55-76 (FFGG…TKSQ), 104-133 (CSEP…LFSS), 161-193 (TVPG…NQTT), 222-245 (EMDK…RQEG), and 366-454 (EVCY…PRDS). Positions 222 to 242 (EMDKRRRAEEEGIGEDEKTGR) are enriched in basic and acidic residues. Composition is skewed to polar residues over residues 377-399 (DSPS…SSPM) and 413-424 (SPQSDRQESVPN). Residues 439-452 (EESRERPHQERLPR) show a composition bias toward basic and acidic residues.

This sequence belongs to the Amer family.

It localises to the cytoplasm. The protein resides in the cell membrane. Its subcellular location is the nucleus. In terms of biological role, regulator of the canonical Wnt signaling pathway. Acts by specifically binding phosphatidylinositol 4,5-bisphosphate (PtdIns(4,5)P2), translocating to the cell membrane and interacting with key regulators of the canonical Wnt signaling pathway, such as components of the beta-catenin destruction complex. Acts both as a positive and negative regulator of the Wnt signaling pathway, depending on the context. This chain is APC membrane recruitment protein 1 (amer1), found in Danio rerio (Zebrafish).